A 347-amino-acid chain; its full sequence is Gas vesicle ATPase GvpN (347 aa).

The segment at 1-50 (MTNSSRERKVRGSQIRTSRREKQDKNARNRTEKELTRLENHQTHRTKNGT) is disordered. The span at 18 to 42 (SRREKQDKNARNRTEKELTRLENHQ) shows a compositional bias: basic and acidic residues. 91–98 (GPTGCGKT) contributes to the ATP binding site.

This sequence belongs to the CbbQ/NirQ/NorQ/GpvN family. In terms of assembly, forms homodimers, a GvpN-GvpO heterodimer, interacts with GvpC and GvpL, might interact with GvpA.

The protein resides in the gas vesicle. Its subcellular location is the cytoplasm. The catalysed reaction is ATP + H2O = ADP + phosphate + H(+). An ATPase that functions in gas vesicle formation. A minor component of the gas vesicle, also found in soluble extracts. Gas vesicles are hollow, gas filled proteinaceous nanostructures found in some microorganisms. They allow positioning of halobacteria at the optimal depth for growth in the poorly aerated, shallow brine pools of their habitat. In terms of biological role, expression of a 9.5 kb mc-vac DNA fragment containing 2 divergently transcribed regions (gvpD-gvpE-gvpF-gvpG-gvpH-gvpI-gvpJ-gvpK-gvpL-gvpM and gvpA-gvpC-gvpN-gvpO) allows H.volcanii to produce gas vesicles. The protein is Gas vesicle ATPase GvpN of Haloferax mediterranei (strain ATCC 33500 / DSM 1411 / JCM 8866 / NBRC 14739 / NCIMB 2177 / R-4) (Halobacterium mediterranei).